Reading from the N-terminus, the 245-residue chain is Putative [LysW]-aminoadipate/[LysW]-glutamate kinase (245 aa).

Positions 60 and 162 each coordinate substrate.

Belongs to the acetylglutamate kinase family. LysZ subfamily.

Its subcellular location is the cytoplasm. The catalysed reaction is [amino-group carrier protein]-C-terminal-N-(1,4-dicarboxybutan-1-yl)-L-glutamine + ATP = [amino-group carrier protein]-C-terminal-N-(1-carboxy-5-phosphooxy-5-oxopentan-1-yl)-L-glutamine + ADP. The enzyme catalyses [amino-group carrier protein]-C-terminal-gamma-(L-glutamyl)-L-glutamate + ATP = [amino-group carrier protein]-C-terminal-gamma-(5-phospho-L-glutamyl)-L-glutamate + ADP. The protein operates within amino-acid biosynthesis; L-lysine biosynthesis via AAA pathway; L-lysine from L-alpha-aminoadipate (Thermus route): step 2/5. Its pathway is amino-acid biosynthesis; L-arginine biosynthesis. Involved in both the arginine and lysine biosynthetic pathways. Phosphorylates the LysW-bound precursors glutamate (for arginine biosynthesis), respectively alpha-aminoadipate (for lysine biosynthesis). This chain is Putative [LysW]-aminoadipate/[LysW]-glutamate kinase, found in Pyrococcus abyssi (strain GE5 / Orsay).